Here is a 301-residue protein sequence, read N- to C-terminus: Probable alpha-L-glutamate ligase (301 aa).

An ATP-grasp domain is found at 104–287; it reads MQLLSRRGIG…IAGMIVEFIE (184 aa). Residues lysine 141, 178 to 179, aspartate 187, and 211 to 213 contribute to the ATP site; these read EY and RSN. Positions 248, 260, and 262 each coordinate Mg(2+). Positions 248, 260, and 262 each coordinate Mn(2+).

Belongs to the RimK family. It depends on Mg(2+) as a cofactor. Mn(2+) is required as a cofactor.

The chain is Probable alpha-L-glutamate ligase from Vibrio cholerae serotype O1 (strain ATCC 39541 / Classical Ogawa 395 / O395).